We begin with the raw amino-acid sequence, 457 residues long: Siroheme synthase 2 (457 aa).

The precorrin-2 dehydrogenase /sirohydrochlorin ferrochelatase stretch occupies residues 1 to 204 (MDHLPIFCQL…DDEQAVTRIT (204 aa)). NAD(+)-binding positions include 22–23 (DV) and 43–44 (LA). Residue S128 is modified to Phosphoserine. The interval 216–457 (GEVVLVGAGP…RDKLNWFSSK (242 aa)) is uroporphyrinogen-III C-methyltransferase. S-adenosyl-L-methionine is bound at residue P225. D248 functions as the Proton acceptor in the catalytic mechanism. Catalysis depends on K270, which acts as the Proton donor. Residues 301-303 (GGD), I306, 331-332 (TA), M382, and G411 contribute to the S-adenosyl-L-methionine site.

In the N-terminal section; belongs to the precorrin-2 dehydrogenase / sirohydrochlorin ferrochelatase family. It in the C-terminal section; belongs to the precorrin methyltransferase family.

The catalysed reaction is uroporphyrinogen III + 2 S-adenosyl-L-methionine = precorrin-2 + 2 S-adenosyl-L-homocysteine + H(+). It carries out the reaction precorrin-2 + NAD(+) = sirohydrochlorin + NADH + 2 H(+). The enzyme catalyses siroheme + 2 H(+) = sirohydrochlorin + Fe(2+). It participates in cofactor biosynthesis; adenosylcobalamin biosynthesis; precorrin-2 from uroporphyrinogen III: step 1/1. Its pathway is cofactor biosynthesis; adenosylcobalamin biosynthesis; sirohydrochlorin from precorrin-2: step 1/1. The protein operates within porphyrin-containing compound metabolism; siroheme biosynthesis; precorrin-2 from uroporphyrinogen III: step 1/1. It functions in the pathway porphyrin-containing compound metabolism; siroheme biosynthesis; siroheme from sirohydrochlorin: step 1/1. It participates in porphyrin-containing compound metabolism; siroheme biosynthesis; sirohydrochlorin from precorrin-2: step 1/1. Functionally, multifunctional enzyme that catalyzes the SAM-dependent methylations of uroporphyrinogen III at position C-2 and C-7 to form precorrin-2 via precorrin-1. Then it catalyzes the NAD-dependent ring dehydrogenation of precorrin-2 to yield sirohydrochlorin. Finally, it catalyzes the ferrochelation of sirohydrochlorin to yield siroheme. This is Siroheme synthase 2 from Cronobacter sakazakii (strain ATCC BAA-894) (Enterobacter sakazakii).